We begin with the raw amino-acid sequence, 238 residues long: Type III secretion protein hrcQa (238 aa).

A hrcQa-C region spans residues 66–238 (DAEALLSLLG…SHEEHSHHEY (173 aa)).

In terms of assembly, interacts with hrcQb.

Its subcellular location is the cell inner membrane. Component of the type III secretion system, which is required for effector protein delivery, parasitism, and pathogenicity. Probably participates in the formation of a C-ring-like assembly along with hrcQb. The sequence is that of Type III secretion protein hrcQa (hrcQa) from Pseudomonas syringae pv. syringae.